Consider the following 227-residue polypeptide: 2,3-bisphosphoglycerate-dependent phosphoglycerate mutase (227 aa).

Substrate is bound by residues 7–14, 20–21, Arg-59, 86–89, Lys-97, 113–114, and 182–183; these read RHGFSEWN, TG, ERHY, RR, and GN. Catalysis depends on His-8, which acts as the Tele-phosphohistidine intermediate. Glu-86 acts as the Proton donor/acceptor in catalysis.

Belongs to the phosphoglycerate mutase family. BPG-dependent PGAM subfamily. Homodimer.

The enzyme catalyses (2R)-2-phosphoglycerate = (2R)-3-phosphoglycerate. Its pathway is carbohydrate degradation; glycolysis; pyruvate from D-glyceraldehyde 3-phosphate: step 3/5. Functionally, catalyzes the interconversion of 2-phosphoglycerate and 3-phosphoglycerate. The chain is 2,3-bisphosphoglycerate-dependent phosphoglycerate mutase from Haemophilus influenzae (strain ATCC 51907 / DSM 11121 / KW20 / Rd).